We begin with the raw amino-acid sequence, 683 residues long: Receptor-like serine/threonine-protein kinase At2g45590 (683 aa).

A disordered region spans residues 1 to 21 (MPSRLSPPDIPPLQPTPTVSD). At 1 to 30 (MPSRLSPPDIPPLQPTPTVSDGHHRFQTLP) the chain is on the extracellular side. A helical membrane pass occupies residues 31–51 (LIIAGSLTLTGVLLILVTLLI). At 52–683 (YRRLYRNRTA…FPFKSRKKAR (632 aa)) the chain is on the cytoplasmic side. A Protein kinase domain is found at 92 to 664 (FSESTHLGHG…GVSEPPHLPF (573 aa)). Residues 98–106 (LGHGGFGSV) and Lys-121 each bind ATP. The active-site Proton acceptor is Asp-223. The tract at residues 406–436 (ERPSNNKEWINNGDGSSSVSKKKKKEKKRKP) is disordered. Residues 411–424 (NKEWINNGDGSSSV) show a composition bias toward polar residues. Positions 425 to 436 (SKKKKKEKKRKP) are enriched in basic residues.

Belongs to the protein kinase superfamily. Ser/Thr protein kinase family.

The protein resides in the cell membrane. It carries out the reaction L-seryl-[protein] + ATP = O-phospho-L-seryl-[protein] + ADP + H(+). The enzyme catalyses L-threonyl-[protein] + ATP = O-phospho-L-threonyl-[protein] + ADP + H(+). In Arabidopsis thaliana (Mouse-ear cress), this protein is Receptor-like serine/threonine-protein kinase At2g45590.